The sequence spans 186 residues: MASPTKAVIVPGNGGGDVATHGWYGWVRKGLEQIPGFQCLAKNMPDPITARESIWLPFMETELHCDEKTIIIGHSSGAIAAMRYAETHQVYALILVSAYTSDLGDENERASGYFSRPWQWEKIKANCPHIIQFGSTDDPFLPWKEQQEVADRLDAKLYKFTDRGHFQNTEFHELIRVVKSMLTPAL.

The involved in binding to RB1 stretch occupies residues 63–67; the sequence is LHCDE. Residues Ser75, Asp138, and His165 each act as charge relay system in the active site.

This sequence belongs to the RBBP9 family. As to quaternary structure, interacts with RB1; the interaction disrupts RB1 binding to E2F1. Interacts with RBL1 and RBL2. As to expression, highly expressed in the spleen, testis and kidney. Also found in the heart, liver, lung and brain.

It carries out the reaction valacyclovir + H2O = acyclovir + L-valine + H(+). Functionally, serine hydrolase. Catalyzes the hydrolytic activation of amino acid ester of the antiviral prodrug valacyclovir to its corresponding active drug, acyclovir. May negatively regulate basal or autocrine TGF-beta signaling by suppressing SMAD2-SMAD3 phosphorylation. May play a role in the transformation process due to its capacity to confer resistance to the growth-inhibitory effects of TGF-beta through interaction with RB1 and the subsequent displacement of E2F1. The polypeptide is Serine hydrolase RBBP9 (Rattus norvegicus (Rat)).